The following is a 329-amino-acid chain: Flotillin-like protein FloA (329 aa).

The chain crosses the membrane as a helical span at residues 4–24 (IWGFLILILVLIFLGVFFSFV).

The protein belongs to the flotillin-like FloA family. Homooligomerizes.

It is found in the cell membrane. The protein resides in the membrane raft. Functionally, found in functional membrane microdomains (FMM) that may be equivalent to eukaryotic membrane rafts. FMMs are highly dynamic and increase in number as cells age. Flotillins are thought to be important factors in membrane fluidity. In Dictyoglomus turgidum (strain DSM 6724 / Z-1310), this protein is Flotillin-like protein FloA.